Reading from the N-terminus, the 450-residue chain is Glutamyl-tRNA reductase (450 aa).

Substrate contacts are provided by residues 50-53 (TCNR), Ser-109, 114-116 (EPQ), and Gln-120. Cys-51 acts as the Nucleophile in catalysis. Position 189–194 (189–194 (GAGEMA)) interacts with NADP(+). Residues 422–450 (NEPEQPEAHKNRKRPQPDLPAGCPGKTIL) are disordered.

This sequence belongs to the glutamyl-tRNA reductase family. As to quaternary structure, homodimer.

The enzyme catalyses (S)-4-amino-5-oxopentanoate + tRNA(Glu) + NADP(+) = L-glutamyl-tRNA(Glu) + NADPH + H(+). The protein operates within porphyrin-containing compound metabolism; protoporphyrin-IX biosynthesis; 5-aminolevulinate from L-glutamyl-tRNA(Glu): step 1/2. Functionally, catalyzes the NADPH-dependent reduction of glutamyl-tRNA(Glu) to glutamate 1-semialdehyde (GSA). The protein is Glutamyl-tRNA reductase of Oleidesulfovibrio alaskensis (strain ATCC BAA-1058 / DSM 17464 / G20) (Desulfovibrio alaskensis).